The following is a 157-amino-acid chain: Phosphopantetheine adenylyltransferase (157 aa).

The protein belongs to the eukaryotic CoaD family.

The protein localises to the cytoplasm. The enzyme catalyses (R)-4'-phosphopantetheine + ATP + H(+) = 3'-dephospho-CoA + diphosphate. It functions in the pathway cofactor biosynthesis; coenzyme A biosynthesis. Reversibly transfers an adenylyl group from ATP to 4'-phosphopantetheine, yielding dephospho-CoA (dPCoA) and pyrophosphate. This Methanopyrus kandleri (strain AV19 / DSM 6324 / JCM 9639 / NBRC 100938) protein is Phosphopantetheine adenylyltransferase.